An 86-amino-acid chain; its full sequence is Small ribosomal subunit protein bS18 (86 aa).

Belongs to the bacterial ribosomal protein bS18 family. Part of the 30S ribosomal subunit. Forms a tight heterodimer with protein bS6.

Functionally, binds as a heterodimer with protein bS6 to the central domain of the 16S rRNA, where it helps stabilize the platform of the 30S subunit. In Campylobacter lari (strain RM2100 / D67 / ATCC BAA-1060), this protein is Small ribosomal subunit protein bS18.